A 227-amino-acid polypeptide reads, in one-letter code: Aspartyl protease inhibitor (227 aa).

The signal sequence occupies residues 1–15; it reads MKLVVLCVLCGIALA. A compositionally biased stretch (basic and acidic residues) spans 88–109; sequence SLKSRMAGKKEKAVTPKEEDLP. The disordered stretch occupies residues 88-116; the sequence is SLKSRMAGKKEKAVTPKEEDLPKAPQKPS. A disulfide bridge connects residues Cys-131 and Cys-223.

It belongs to the protease inhibitor I33 family.

It is found in the secreted. Functionally, aspartyl protease inhibitor. This chain is Aspartyl protease inhibitor (API), found in Ostertagia ostertagi (Brown stomach worm).